The primary structure comprises 1059 residues: Pleckstrin homology domain-containing family M member 1 (1059 aa).

Residues 40 to 182 (TSEDGDANTM…LSFELSYKSA (143 aa)) enclose the RUN domain. The residue at position 218 (Ser-218) is a Phosphoserine. Disordered stretches follow at residues 218-244 (SLDS…RRDR), 272-334 (LQEN…TPMF), and 354-411 (SEEP…DQGS). Composition is skewed to polar residues over residues 313 to 334 (SKAQ…TPMF) and 392 to 401 (GSTSDQQPSS). A phosphoserine mark is found at Ser-430, Ser-433, and Ser-488. The PH 1 domain occupies 536-627 (GLMKLGTVAR…WLDRVREALQ (92 aa)). Positions 634-640 (EEEWVNI) match the LIR motif. An interaction with RAB7A region spans residues 657–1059 (LPPYSALLPE…RKYQEQNTVS (403 aa)). The PH 2 domain maps to 686 to 780 (DAIKESLLYL…WRDLVRKVLA (95 aa)). A Phorbol-ester/DAG-type zinc finger spans residues 989-1043 (QHVYHCDLCTQRGFICQICHHQDIIFPFEFDTTVRCAECRTVFHQSCQAVVRKGC).

As to quaternary structure, interacts (via N- and C-terminus) with RAB7A (GTP-bound form). Simultaneously interacts with RAB7A and ARL8B; bringing about clustering and fusion of late endosomes and lysosomes. Interacts (via RUN domain) with ARL8B (GTP-bound form); the interaction is required for PLEKHM1 localization to lysosomes and for ARL8B function in delivery and degradation of endocytic and autophagic cargo in lysosomes. PLEKHM1 and PLEKHM2 compete for interaction with ARL8B. Interacts with ARL8A; the interaction is weaker than with ARL8B. Interacts with VPS41, VPS11, VPS18, VPS33A and VPS39; indicative for an association with the HOPS complex; the interactions with, at least, VPS41, VPS11, VPS18 and VPS33A require ARL8B. Interacts with GABARAP, GABARAPL, GABARAPL2, MAP1LC3A, MAP1LC3B and MAP1LC3C. Interacts with PAFAH1B. Interacts (via N- and C-terminus) with NDEL1. Interacts (via C-terminus) with MAP3K7. Interacts (via N- and C-terminus) with FAM98A. Interacts (via C-terminus) with DEF8; this interaction is weak but increased in a RAB7A-dependent manner. May interact with sialyl-lex-positive protein. As to expression, expressed in testis, skeletal muscle, lung, liver, spleen, brain, heart, kidney and bone. Weakly expressed in monocytes (at protein level).

Its subcellular location is the autolysosome membrane. It localises to the endosome membrane. The protein localises to the late endosome membrane. It is found in the lysosome membrane. Its function is as follows. Acts as a multivalent adapter protein that regulates Rab7-dependent and HOPS complex-dependent fusion events in the endolysosomal system and couples autophagic and the endocytic trafficking pathways. Acts as a dual effector of RAB7A and ARL8B that simultaneously binds these GTPases, bringing about clustering and fusion of late endosomes and lysosomes. Required for late stages of endolysosomal maturation, facilitating both endocytosis-mediated degradation of growth factor receptors and autophagosome clearance. Interaction with Arl8b is a crucial factor in the terminal maturation of autophagosomes and to mediate autophagosome-lysosome fusion. Positively regulates lysosome peripheral distribution and ruffled border formation in osteoclasts. May be involved in negative regulation of endocytic transport from early endosome to late endosome/lysosome implicating its association with Rab7. May have a role in sialyl-lex-mediated transduction of apoptotic signals. Involved in bone resorption. This chain is Pleckstrin homology domain-containing family M member 1, found in Rattus norvegicus (Rat).